The sequence spans 218 residues: Methylthioribulose-1-phosphate dehydratase (218 aa).

Zn(2+) is bound by residues H107 and H109.

This sequence belongs to the aldolase class II family. MtnB subfamily. The cofactor is Zn(2+).

It catalyses the reaction 5-(methylsulfanyl)-D-ribulose 1-phosphate = 5-methylsulfanyl-2,3-dioxopentyl phosphate + H2O. It functions in the pathway amino-acid biosynthesis; L-methionine biosynthesis via salvage pathway; L-methionine from S-methyl-5-thio-alpha-D-ribose 1-phosphate: step 2/6. Its function is as follows. Catalyzes the dehydration of methylthioribulose-1-phosphate (MTRu-1-P) into 2,3-diketo-5-methylthiopentyl-1-phosphate (DK-MTP-1-P). This Xylella fastidiosa (strain 9a5c) protein is Methylthioribulose-1-phosphate dehydratase.